The sequence spans 777 residues: DnaJ homolog subfamily C member 16 (777 aa).

The signal sequence occupies residues 1-23 (MELGRAGPAGLLLLLLLLLAAQA). Topologically, residues 24–531 (APERDPYRVL…DSLFHSNWRE (508 aa)) are cytoplasmic. The region spanning 28–92 (DPYRVLGVGR…EKRANFDRYG (65 aa)) is the J domain. The Thioredoxin domain maps to 117–243 (FDESFFHFPF…LRQFVENLLP (127 aa)). The helical; Anchor for type IV membrane protein transmembrane segment at 532–552 (MMPLLSLLFSALFILFGTVIV) threads the bilayer. The Extracellular portion of the chain corresponds to 553-777 (QAFSDSSDTR…FYIPSWPALD (225 aa)). The segment at 558-589 (SSDTRDSPASEKKDTTAKTEKNDTSFNKESNS) is disordered. Residues 559–580 (SDTRDSPASEKKDTTAKTEKND) are compositionally biased toward basic and acidic residues. N627 carries N-linked (GlcNAc...) asparagine glycosylation.

The protein resides in the endoplasmic reticulum membrane. Plays an important role in regulating the size of autophagosomes during the formation process. The chain is DnaJ homolog subfamily C member 16 (DNAJC16) from Gallus gallus (Chicken).